Reading from the N-terminus, the 242-residue chain is Probable derlin-1 homolog (242 aa).

The Cytoplasmic portion of the chain corresponds to 1–18 (MDGVKEWFNSIPPVSRYM). A helical membrane pass occupies residues 19–39 (FAIFLGIPVLAAMHLISFNYL). Over 40–98 (YLDFTFTFKHFHLWRLITAPCIISSLGPMFLFNLIFFYQYTTRLESLNYAGKSDDYLFC) the chain is Lumenal. Residues 99 to 119 (IIFISICNIIFGLIFEYYFLG) form a helical membrane-spanning segment. The Cytoplasmic portion of the chain corresponds to 120 to 140 (TMTIMSLIYIYSRMNPTGTSN). Residues 141–161 (FYGFFSFKTIYLPWVFLVAHF) form a helical membrane-spanning segment. The Lumenal portion of the chain corresponds to 162-167 (LQTGHP). The helical transmembrane segment at 168–188 (PYSDFLAIVSGHIFFYLTDIY) threads the bilayer. Residues 189–242 (PRANGVPALIKTPKFITNIFNKGDRNPNNVRRDPRTGRPIQEGGYNWGQGHALG) lie on the Cytoplasmic side of the membrane. Residues 214–224 (NPNNVRRDPRT) show a composition bias toward basic and acidic residues. A disordered region spans residues 214–242 (NPNNVRRDPRTGRPIQEGGYNWGQGHALG). The segment covering 233-242 (YNWGQGHALG) has biased composition (gly residues).

The protein belongs to the derlin family.

The protein localises to the endoplasmic reticulum membrane. May be involved in the degradation process of specific misfolded endoplasmic reticulum (ER) luminal proteins. May also involved in endoplasmic reticulum stress-induced pre-emptive quality control, a mechanism that selectively attenuates the translocation of newly synthesized proteins into the endoplasmic reticulum and reroutes them to the cytosol for proteasomal degradation. This is Probable derlin-1 homolog from Dictyostelium discoideum (Social amoeba).